The primary structure comprises 156 residues: V-type proton ATPase 16 kDa proteolipid subunit c (156 aa).

The Lumenal segment spans residues Met1–Tyr7. Residues Gly8–Gly30 form a helical membrane-spanning segment. The Cytoplasmic portion of the chain corresponds to Thr31 to Ser52. The chain crosses the membrane as a helical span at residues Ile53–Ile73. Residues Ala74–His92 lie on the Lumenal side of the membrane. The helical transmembrane segment at Leu93 to Gly114 threads the bilayer. The Cytoplasmic portion of the chain corresponds to Asp115–Arg126. The helical transmembrane segment at Leu127–Leu152 threads the bilayer. Residues Tyr153–Gln156 lie on the Lumenal side of the membrane.

Belongs to the V-ATPase proteolipid subunit family. As to quaternary structure, V-ATPase is a heteromultimeric enzyme made up of two complexes: the ATP-hydrolytic V1 complex and the proton translocation V0 complex. The V1 complex consists of three catalytic AB heterodimers that form a heterohexamer, three peripheral stalks each consisting of EG heterodimers, one central rotor including subunits D and F, and the regulatory subunits C and H. The proton translocation complex V0 consists of the proton transport subunit a, a ring of proteolipid subunits c9c'', rotary subunit d, subunits e and f, and the accessory subunits VhaAC45 and ATP6AP2.

Its subcellular location is the membrane. Proton-conducting pore forming subunit of the V0 complex of vacuolar(H+)-ATPase (V-ATPase), a multisubunit enzyme composed of a peripheral complex (V1) that hydrolyzes ATP and a membrane integral complex (V0) that translocates protons. V-ATPase is responsible for acidifying and maintaining the pH of intracellular compartments and in some cell types, is targeted to the plasma membrane, where it is responsible for acidifying the extracellular environment. This chain is V-type proton ATPase 16 kDa proteolipid subunit c (VHA16), found in Manduca sexta (Tobacco hawkmoth).